We begin with the raw amino-acid sequence, 396 residues long: Immunoglobulin heavy constant gamma 4 (396 aa).

Residues 1–98 form a CH1 region; that stretch reads ASTKGPSVFP…PSNTKVDKRV (98 aa). At 1 to 347 the chain is on the extracellular side; the sequence is ASTKGPSVFP…DGELDGLWTT (347 aa). 3 Ig-like domains span residues 6–99, 118–217, and 226–322; these read PSVF…KRVE, PSVF…KTIS, and PQVY…KSLS. The cysteines at positions 27 and 83 are disulfide-linked. A hinge region spans residues 99–110; it reads ESKYGPPCPSCP. Positions 111-220 are CH2; the sequence is APEFLGGPSV…SIEKTISKAK (110 aa). 2 disulfides stabilise this stretch: cysteine 141–cysteine 201 and cysteine 247–cysteine 305. Asparagine 177 is a glycosylation site (N-linked (GlcNAc...) (complex) asparagine). The tract at residues 221-327 is CH3; sequence GQPREPQVYT…QKSLSLSLEL (107 aa). Residues 348–368 form a helical membrane-spanning segment; that stretch reads ITIFITLFLLSVCYSATVTFF. The Cytoplasmic portion of the chain corresponds to 369 to 396; it reads KVKWIFSSVVDLKQTIVPDYRNMIRQGA.

Immunoglobulins are composed of two identical heavy chains and two identical light chains; disulfide-linked. Post-translationally, glycosylation on Asn-177 is required for interaction with Fc receptors and ability to activate the complement pathway. (Microbial infection) Deglycosylation on Asn-177 by S.pyogenes EndoS or Endos2 endoglucosidases prevents interaction between immunoglobulin-gamma (IgG) and Fc receptors, impairing ability to activate the complement pathway.

It localises to the secreted. The protein resides in the cell membrane. Functionally, constant region of immunoglobulin heavy chains. Immunoglobulins, also known as antibodies, are membrane-bound or secreted glycoproteins produced by B lymphocytes. In the recognition phase of humoral immunity, the membrane-bound immunoglobulins serve as receptors which, upon binding of a specific antigen, trigger the clonal expansion and differentiation of B lymphocytes into immunoglobulins-secreting plasma cells. Secreted immunoglobulins mediate the effector phase of humoral immunity, which results in the elimination of bound antigens. The antigen binding site is formed by the variable domain of one heavy chain, together with that of its associated light chain. Thus, each immunoglobulin has two antigen binding sites with remarkable affinity for a particular antigen. The variable domains are assembled by a process called V-(D)-J rearrangement and can then be subjected to somatic hypermutations which, after exposure to antigen and selection, allow affinity maturation for a particular antigen. In Homo sapiens (Human), this protein is Immunoglobulin heavy constant gamma 4.